Consider the following 219-residue polypeptide: 7-carboxy-7-deazaguanine synthase (219 aa).

Substrate-binding positions include 12–14 (IQG) and Arg27. The 202-residue stretch at 18–219 (YTGTPSIFIR…VQIHKYLKIR (202 aa)) folds into the Radical SAM core domain. 3 residues coordinate [4Fe-4S] cluster: Cys31, Cys35, and Cys38. Thr40 is a Mg(2+) binding site. Residue Thr92 coordinates substrate. S-adenosyl-L-methionine contacts are provided by residues Gly94 and 136 to 138 (SPK).

Belongs to the radical SAM superfamily. 7-carboxy-7-deazaguanine synthase family. In terms of assembly, homodimer. [4Fe-4S] cluster is required as a cofactor. S-adenosyl-L-methionine serves as cofactor. Requires Mg(2+) as cofactor.

It carries out the reaction 6-carboxy-5,6,7,8-tetrahydropterin + H(+) = 7-carboxy-7-deazaguanine + NH4(+). The protein operates within purine metabolism; 7-cyano-7-deazaguanine biosynthesis. In terms of biological role, catalyzes the complex heterocyclic radical-mediated conversion of 6-carboxy-5,6,7,8-tetrahydropterin (CPH4) to 7-carboxy-7-deazaguanine (CDG), a step common to the biosynthetic pathways of all 7-deazapurine-containing compounds. The polypeptide is 7-carboxy-7-deazaguanine synthase (Buchnera aphidicola subsp. Schizaphis graminum (strain Sg)).